A 919-amino-acid chain; its full sequence is Phosphoenolpyruvate carboxylase (919 aa).

Catalysis depends on residues His138 and Lys579.

The protein belongs to the PEPCase type 1 family. It depends on Mg(2+) as a cofactor.

The catalysed reaction is oxaloacetate + phosphate = phosphoenolpyruvate + hydrogencarbonate. Activity not stimulated by acetyl-CoA in the absence of any allosteric inhibitor, while the corresponding protein from E.coli is strongly stimulated. Forms oxaloacetate, a four-carbon dicarboxylic acid source for the tricarboxylic acid cycle. The polypeptide is Phosphoenolpyruvate carboxylase (ppc) (Corynebacterium glutamicum (strain ATCC 13032 / DSM 20300 / JCM 1318 / BCRC 11384 / CCUG 27702 / LMG 3730 / NBRC 12168 / NCIMB 10025 / NRRL B-2784 / 534)).